The following is a 494-amino-acid chain: Potassium voltage-gated channel subfamily A member 2 (494 aa).

A disordered region spans residues 1 to 25 (MTVATGDPSDEAAAHPGNPAEYDPD). A tetramerization domain region spans residues 1–124 (MTVATGDPSD…YELGDEAIEL (124 aa)). Residues 1–159 (MTVATGDPSD…LLFEYPESSG (159 aa)) are Cytoplasmic-facing. Residues 160–181 (PARIIAIISVMVILISIVSFCL) traverse the membrane as a helical segment. The Extracellular portion of the chain corresponds to 182–216 (ETLPIFRNDDDEPHSVFDTNTNTTIYFTSTYFTDP). N-linked (GlcNAc...) asparagine glycosylation occurs at asparagine 203. The chain crosses the membrane as a helical span at residues 217–238 (FFILETLCIIWFSFEFLVRLFA). Cysteine 239 carries the S-palmitoyl cysteine lipid modification. The Cytoplasmic portion of the chain corresponds to 239–249 (CPSKSGFFGNV). The chain crosses the membrane as a helical span at residues 250 to 270 (MNIIDVVAIIPYFITLATELA). The Extracellular segment spans residues 271 to 284 (EKPEDGQAGQQAMS). The chain crosses the membrane as a helical; Voltage-sensor span at residues 285 to 305 (LAILRVIRLVRVFRIFKLSRH). Over 306–320 (SKGLQILGQTLKASM) the chain is Cytoplasmic. An S4-S5 linker region spans residues 307–320 (KGLQILGQTLKASM). The helical transmembrane segment at 321–342 (RELGLLIFFLFIGVILFSSAVY) threads the bilayer. Residues 343 to 356 (FAEADEPESQFESI) lie on the Extracellular side of the membrane. An intramembrane region (helical) is located at residues 357 to 368 (PDAFWWAVVSMT). A Selectivity filter motif is present at residues 369-374 (TVGYGD). An intramembrane segment occupies 369–376 (TVGYGDMV). Topologically, residues 377–383 (PTTIGGK) are extracellular. Residues 384–412 (IVGSLCAIAGVLTIALPVPVIVSNFNYFY) form a helical membrane-spanning segment. The Cytoplasmic portion of the chain corresponds to 413-494 (HRETEGEEQA…VNITKMLTDV (82 aa)). Positions 492–494 (TDV) match the PDZ-binding motif.

It belongs to the potassium channel family. A (Shaker) (TC 1.A.1.2) subfamily. Kv1.2/KCNA2 sub-subfamily. Homotetramer and heterotetramer with other family members. As to expression, expressed in oligodendrocytes.

The protein resides in the cell membrane. The catalysed reaction is K(+)(in) = K(+)(out). In terms of biological role, voltage-gated potassium channel that mediates transmembrane potassium transport in excitable membranes, primarily in the brain and central nervous system. Prevents aberrant action potential firing and regulates neuronal output. Forms tetrameric potassium-selective channels through which potassium ions pass in accordance with their electrochemical gradient. The channel alternates between opened and closed conformations in response to the voltage difference across the membrane. Can form functional homotetrameric channels and heterotetrameric channels with other family members; the channels characteristics depend critically on the types of channel-forming alpha subunits that are present. Channel properties are modulated by cytoplasmic beta subunits that regulate the subcellular location of the alpha subunits. In vivo, membranes probably contain a mixture of heteromeric potassium channel complexes, making it difficult to assign currents observed in intact tissues to any particular potassium channel family member. Homotetrameric KCNA2 forms a delayed-rectifier potassium channel that opens in response to membrane depolarization, followed by slow spontaneous channel closure. Regulates neuronal excitability and plays a role as pacemaker in the regulation of neuronal action potentials. KCNA2-containing channels play a presynaptic role and prevent hyperexcitability and aberrant action potential firing. Response to toxins that are selective for KCNA2-containing potassium channels suggests that in Purkinje cells, dendritic subthreshold KCNA2-containing potassium channels prevent random spontaneous calcium spikes, suppressing dendritic hyperexcitability without hindering the generation of somatic action potentials, and thereby play an important role in motor coordination. Plays a role in the induction of long-term potentiation of neuron excitability in the CA3 layer of the hippocampus. The protein is Potassium voltage-gated channel subfamily A member 2 (kcna2) of Oncorhynchus mykiss (Rainbow trout).